The following is a 334-amino-acid chain: Aspartate carbamoyltransferase catalytic subunit (334 aa).

Carbamoyl phosphate contacts are provided by Arg71 and Thr72. Lys99 lines the L-aspartate pocket. The carbamoyl phosphate site is built by Arg121, His151, and Gln154. Residues Arg184 and Arg239 each coordinate L-aspartate. Residues Gly280 and Pro281 each contribute to the carbamoyl phosphate site.

This sequence belongs to the aspartate/ornithine carbamoyltransferase superfamily. ATCase family. As to quaternary structure, heterododecamer (2C3:3R2) of six catalytic PyrB chains organized as two trimers (C3), and six regulatory PyrI chains organized as three dimers (R2).

The enzyme catalyses carbamoyl phosphate + L-aspartate = N-carbamoyl-L-aspartate + phosphate + H(+). It participates in pyrimidine metabolism; UMP biosynthesis via de novo pathway; (S)-dihydroorotate from bicarbonate: step 2/3. Catalyzes the condensation of carbamoyl phosphate and aspartate to form carbamoyl aspartate and inorganic phosphate, the committed step in the de novo pyrimidine nucleotide biosynthesis pathway. This is Aspartate carbamoyltransferase catalytic subunit from Pseudomonas entomophila (strain L48).